We begin with the raw amino-acid sequence, 206 residues long: Guanylate kinase (206 aa).

The region spanning 7 to 185 (GIVLVLCAPS…AYDELRAAYL (179 aa)) is the Guanylate kinase-like domain. 14-21 (APSGTGKT) serves as a coordination point for ATP.

Belongs to the guanylate kinase family.

Its subcellular location is the cytoplasm. The enzyme catalyses GMP + ATP = GDP + ADP. Functionally, essential for recycling GMP and indirectly, cGMP. This chain is Guanylate kinase, found in Oleidesulfovibrio alaskensis (strain ATCC BAA-1058 / DSM 17464 / G20) (Desulfovibrio alaskensis).